The chain runs to 138 residues: Acidic phospholipase A2 inhibitor vaspin A chain (138 aa).

The N-terminal stretch at 1-16 is a signal peptide; it reads MRTLWIVAVCLIGVEG. Cystine bridges form between C42-C131, C44-C60, C59-C111, C65-C138, C66-C104, C73-C97, and C91-C102.

This sequence belongs to the phospholipase A2 family. Group II subfamily. D49 sub-subfamily. In terms of assembly, heterodimer of a toxic basic protein having phospholipase A2 activity (B chain (AC Q8JFG0)) and a non-toxic acidic protein functioning as its inhibitor (A chain). In terms of tissue distribution, expressed by the venom gland.

Its subcellular location is the secreted. Functionally, heterodimer: postsynaptic neurotoxin. Monomer: the acidic chain inhibits the basic phospholipase A2 of the complex. This chain is Acidic phospholipase A2 inhibitor vaspin A chain, found in Vipera aspis aspis (Aspic viper).